We begin with the raw amino-acid sequence, 831 residues long: Multiphosphoryl transfer protein (831 aa).

Residues 1–90 enclose the HPr domain; the sequence is MLTIQFLCPL…EYIQVRFIDS (90 aa). H15 serves as the catalytic Pros-phosphohistidine intermediate; for HPr activity. Position 15 is a phosphohistidine; by EI (H15). Residues 119–650 are PTS EI; sequence GNVLASGVGV…AVKSQLRQLD (532 aa). H298 acts as the Tele-phosphohistidine intermediate; for PTS EI activity in catalysis. Position 298 is a phosphohistidine; by autocatalysis (H298). 2 residues coordinate phosphoenolpyruvate: R405 and R441. Positions 540 and 564 each coordinate Mg(2+). Phosphoenolpyruvate contacts are provided by residues 563–564 and R574; that span reads ND. Residue C611 is the Proton donor; for EI activity of the active site. Residues 685 to 828 form the PTS EIIA type-2 domain; sequence PLLALENIFV…QSILTLLETE (144 aa). H747 functions as the Tele-phosphohistidine intermediate; for PTS EIIA activity in the catalytic mechanism. Residue H747 is modified to Phosphohistidine; by HPr.

Belongs to the PEP-utilizing enzyme family. Requires Mg(2+) as cofactor.

It localises to the cytoplasm. It carries out the reaction L-histidyl-[protein] + phosphoenolpyruvate = N(pros)-phospho-L-histidyl-[protein] + pyruvate. It catalyses the reaction D-fructose(out) + N(pros)-phospho-L-histidyl-[protein] = D-fructose 1-phosphate(in) + L-histidyl-[protein]. Multifunctional protein that includes general (non sugar-specific) and sugar-specific components of the phosphoenolpyruvate-dependent sugar phosphotransferase system (sugar PTS). This major carbohydrate active transport system catalyzes the phosphorylation of incoming sugar substrates concomitantly with their translocation across the cell membrane. The enzyme II FryABC PTS system is involved in fructose transport. The sequence is that of Multiphosphoryl transfer protein (fryA) from Escherichia coli O157:H7.